The following is a 163-amino-acid chain: Large ribosomal subunit protein uL18 (163 aa).

Belongs to the universal ribosomal protein uL18 family. Part of the 50S ribosomal subunit. Contacts the 5S and 23S rRNAs.

In terms of biological role, this is one of the proteins that bind and probably mediate the attachment of the 5S RNA into the large ribosomal subunit, where it forms part of the central protuberance. This chain is Large ribosomal subunit protein uL18, found in Thermoplasma acidophilum (strain ATCC 25905 / DSM 1728 / JCM 9062 / NBRC 15155 / AMRC-C165).